The following is a 227-amino-acid chain: Cytochrome c oxidase subunit 2 (227 aa).

Residues 1–14 (MAHAVQYGFQDAAA) are Mitochondrial intermembrane-facing. Residues 15 to 45 (PIMEELLYFHDHTLMIVFMISSLVLYIISLM) traverse the membrane as a helical segment. The Mitochondrial matrix portion of the chain corresponds to 46 to 59 (LSTELTHTSTMDAQ). Residues 60-87 (EVETVWTILPAVILILIALPSLRILYMM) form a helical membrane-spanning segment. Residues 88–227 (DEIETPSLTL…YFEEWLLKTL (140 aa)) are Mitochondrial intermembrane-facing. 6 residues coordinate Cu cation: His161, Cys196, Glu198, Cys200, His204, and Met207. Glu198 lines the Mg(2+) pocket. Position 218 is a phosphotyrosine (Tyr218).

Belongs to the cytochrome c oxidase subunit 2 family. As to quaternary structure, component of the cytochrome c oxidase (complex IV, CIV), a multisubunit enzyme composed of 14 subunits. The complex is composed of a catalytic core of 3 subunits MT-CO1, MT-CO2 and MT-CO3, encoded in the mitochondrial DNA, and 11 supernumerary subunits COX4I, COX5A, COX5B, COX6A, COX6B, COX6C, COX7A, COX7B, COX7C, COX8 and NDUFA4, which are encoded in the nuclear genome. The complex exists as a monomer or a dimer and forms supercomplexes (SCs) in the inner mitochondrial membrane with NADH-ubiquinone oxidoreductase (complex I, CI) and ubiquinol-cytochrome c oxidoreductase (cytochrome b-c1 complex, complex III, CIII), resulting in different assemblies (supercomplex SCI(1)III(2)IV(1) and megacomplex MCI(2)III(2)IV(2)). Found in a complex with TMEM177, COA6, COX18, COX20, SCO1 and SCO2. Interacts with TMEM177 in a COX20-dependent manner. Interacts with COX20. Interacts with COX16. It depends on Cu cation as a cofactor.

It is found in the mitochondrion inner membrane. The enzyme catalyses 4 Fe(II)-[cytochrome c] + O2 + 8 H(+)(in) = 4 Fe(III)-[cytochrome c] + 2 H2O + 4 H(+)(out). Component of the cytochrome c oxidase, the last enzyme in the mitochondrial electron transport chain which drives oxidative phosphorylation. The respiratory chain contains 3 multisubunit complexes succinate dehydrogenase (complex II, CII), ubiquinol-cytochrome c oxidoreductase (cytochrome b-c1 complex, complex III, CIII) and cytochrome c oxidase (complex IV, CIV), that cooperate to transfer electrons derived from NADH and succinate to molecular oxygen, creating an electrochemical gradient over the inner membrane that drives transmembrane transport and the ATP synthase. Cytochrome c oxidase is the component of the respiratory chain that catalyzes the reduction of oxygen to water. Electrons originating from reduced cytochrome c in the intermembrane space (IMS) are transferred via the dinuclear copper A center (CU(A)) of subunit 2 and heme A of subunit 1 to the active site in subunit 1, a binuclear center (BNC) formed by heme A3 and copper B (CU(B)). The BNC reduces molecular oxygen to 2 water molecules using 4 electrons from cytochrome c in the IMS and 4 protons from the mitochondrial matrix. The protein is Cytochrome c oxidase subunit 2 (MT-CO2) of Galago senegalensis (Northern lesser bushbaby).